Consider the following 445-residue polypeptide: Chromosome partition protein MukF (445 aa).

Residues 213–241 are leucine-zipper; that stretch reads LSETSATLKELQDTLQAAGDELQTQILDI.

It belongs to the MukF family. Interacts, and probably forms a ternary complex, with MukE and MukB via its C-terminal region. The complex formation is stimulated by calcium or magnesium. It is required for an interaction between MukE and MukB.

The protein resides in the cytoplasm. It is found in the nucleoid. Functionally, involved in chromosome condensation, segregation and cell cycle progression. May participate in facilitating chromosome segregation by condensation DNA from both sides of a centrally located replisome during cell division. Not required for mini-F plasmid partitioning. Probably acts via its interaction with MukB and MukE. Overexpression results in anucleate cells. It has a calcium binding activity. In Vibrio atlanticus (strain LGP32) (Vibrio splendidus (strain Mel32)), this protein is Chromosome partition protein MukF.